The following is a 304-amino-acid chain: ADP-polyphosphate phosphotransferase (304 aa).

This sequence belongs to the polyphosphate kinase 2 (PPK2) family. Class I subfamily.

The catalysed reaction is [phosphate](n) + ATP = [phosphate](n+1) + ADP. In terms of biological role, uses inorganic polyphosphate (polyP) as a donor to convert ADP to ATP. The sequence is that of ADP-polyphosphate phosphotransferase from Pseudomonas aeruginosa (strain ATCC 15692 / DSM 22644 / CIP 104116 / JCM 14847 / LMG 12228 / 1C / PRS 101 / PAO1).